Reading from the N-terminus, the 361-residue chain is Protein RecA (361 aa).

77 to 84 (GPESSGKT) contributes to the ATP binding site.

The protein belongs to the RecA family.

The protein resides in the cytoplasm. Can catalyze the hydrolysis of ATP in the presence of single-stranded DNA, the ATP-dependent uptake of single-stranded DNA by duplex DNA, and the ATP-dependent hybridization of homologous single-stranded DNAs. It interacts with LexA causing its activation and leading to its autocatalytic cleavage. The sequence is that of Protein RecA from Rhizobium etli.